Consider the following 202-residue polypeptide: Ribosome maturation factor RimM (202 aa).

The PRC barrel domain maps to 100 to 195; sequence ADEWYPKDLI…YLTLDPPGGL (96 aa).

Belongs to the RimM family. Binds ribosomal protein uS19.

The protein localises to the cytoplasm. Its function is as follows. An accessory protein needed during the final step in the assembly of 30S ribosomal subunit, possibly for assembly of the head region. Essential for efficient processing of 16S rRNA. May be needed both before and after RbfA during the maturation of 16S rRNA. It has affinity for free ribosomal 30S subunits but not for 70S ribosomes. In Bifidobacterium longum (strain NCC 2705), this protein is Ribosome maturation factor RimM.